A 793-amino-acid chain; its full sequence is MSRRRHSDDSDDSDGQPHKRRRTSEPSEIEERLESLICRVGEKSNSSLESNLEGLAGVLEADLPNYKSKILRILCTVARLLPEKLTVYTTLVGLLNARNYNFGGEFVEAMIRQLKECLKVNMYNEAVHLVRFLSDLVNCHVIAAPSMVAMFENFVSVTQEEDVPQVRCDWYIFAFLSSLPWVGKELYEKKDAEMDRLLSQTESYLKRRQKIHVPMLQVWTADKPHPQEEYLDCLWSQIQKLKKDRWQERHILRPYLAFDSILCEALQHNLPPFTPPPHTEDSVYPMPRVIFRMFDYTDDPEGPVMPGSHSVERFVIEENLHCIIKSHWKERKTCAAQLLSYPGNNKIPLNYHIVEVIFAELFQLPSPPHIEVMYTTLLIELCKLQPGSLPQVLAQATEMLYMRLDTMNTTCVDRFINWFSHHLSNFQFRWSWEDWSDCLTQDLEKPKPKFVREVLEKCMRLSYHQRIIDIVPASFSVLSPANPVCIYKYGDESNRSLPGYTVALCLTIAIKNKASNDEIFSILKDVPNPNQDDDDDEGFTFNPLKIEVFVQTLLHLAAKSFSHSFSALAKFHEVFKTLAESDEGKLHVLRVVYEVWKNHPQMIAVLVDKMIRTQIVDCAAVANWIFSSELAHDFTRFYIWEILHSTIRKMNKHVLKIHKELEDTKARLARQHKRRDSDDDDRSSDREDGPLEEQIERLQEKVESAQSEQKNLFLVIFQRFIMLLTEHLVRCETGGIDVFTPWYKSCIERLQQIFLQHHQIIQQYMVTFENLLFTAELDHHILAVFQQFCALQA.

Disordered stretches follow at residues 1–30 (MSRR…SEIE) and 668–692 (LARQ…GPLE). One can recognise an MIF4G domain in the interval 30 to 242 (EERLESLICR…CLWSQIQKLK (213 aa)). The span at 683–692 (SSDREDGPLE) shows a compositional bias: basic and acidic residues. Positions 686–716 (REDGPLEEQIERLQEKVESAQSEQKNLFLVI) form a coiled coil.

Belongs to the NCBP1 family. As to quaternary structure, component of the nuclear cap-binding complex (CBC), a heterodimer composed of NCBP1/CBP80 and NCBP2/CBP20 that interacts with m7GpppG-capped RNA. Component of an alternative nuclear cap-binding complex (CBC) composed of NCBP1/CBP80 and NCBP3.

It localises to the nucleus. The protein resides in the cytoplasm. In terms of biological role, component of the cap-binding complex (CBC), which binds cotranscriptionally to the 5'-cap of pre-mRNAs and is involved in various processes such as pre-mRNA splicing, translation regulation, nonsense-mediated mRNA decay, RNA-mediated gene silencing (RNAi) by microRNAs (miRNAs) and mRNA export. The CBC complex is involved in mRNA export from the nucleus, leading to the recruitment of the mRNA export machinery to the 5'-end of mRNA and to mRNA export in a 5' to 3' direction through the nuclear pore. The CBC complex is also involved in mediating U snRNA and intronless mRNAs export from the nucleus. The CBC complex is essential for a pioneer round of mRNA translation, before steady state translation when the CBC complex is replaced by cytoplasmic cap-binding protein eIF4E. The pioneer round of mRNA translation mediated by the CBC complex plays a central role in nonsense-mediated mRNA decay (NMD), NMD only taking place in mRNAs bound to the CBC complex, but not on eIF4E-bound mRNAs. The CBC complex enhances NMD in mRNAs containing at least one exon-junction complex (EJC), promoting the interaction between UPF1 and UPF2. The CBC complex is also involved in 'failsafe' NMD, which is independent of the EJC complex, while it does not participate in Staufen-mediated mRNA decay (SMD). During cell proliferation, the CBC complex is also involved in microRNAs (miRNAs) biogenesis via its interaction with SRRT/ARS2 and is required for miRNA-mediated RNA interference. The CBC complex also acts as a negative regulator of PARN, thereby acting as an inhibitor of mRNA deadenylation. In the CBC complex, NCBP1/CBP80 does not bind directly capped RNAs (m7GpppG-capped RNA) but is required to stabilize the movement of the N-terminal loop of NCBP2/CBP20 and lock the CBC into a high affinity cap-binding state with the cap structure. Associates with NCBP3 to form an alternative cap-binding complex (CBC) which plays a key role in mRNA export. The conventional CBC with NCBP2 binds both small nuclear RNA (snRNA) and messenger (mRNA) and is involved in their export from the nucleus whereas the alternative CBC with NCBP3 does not bind snRNA and associates only with mRNA thereby playing a role only in mRNA export. In Gallus gallus (Chicken), this protein is Nuclear cap-binding protein subunit 1 (NCBP1).